The sequence spans 1342 residues: DNA-directed RNA polymerase subunit beta (1342 aa).

The protein belongs to the RNA polymerase beta chain family. The RNAP catalytic core consists of 2 alpha, 1 beta, 1 beta' and 1 omega subunit. When a sigma factor is associated with the core the holoenzyme is formed, which can initiate transcription.

The enzyme catalyses RNA(n) + a ribonucleoside 5'-triphosphate = RNA(n+1) + diphosphate. In terms of biological role, DNA-dependent RNA polymerase catalyzes the transcription of DNA into RNA using the four ribonucleoside triphosphates as substrates. This Salmonella typhi protein is DNA-directed RNA polymerase subunit beta.